The chain runs to 887 residues: Bifunctional uridylyltransferase/uridylyl-removing enzyme (887 aa).

The interval Met-1–Ile-329 is uridylyltransferase. Residues Ile-330–Val-686 are uridylyl-removing. Positions Val-448–Leu-570 constitute an HD domain. ACT domains follow at residues Glu-687–Ser-772 and Val-796–Pro-871. A disordered region spans residues Thr-864–Arg-887.

This sequence belongs to the GlnD family. The cofactor is Mg(2+).

It carries out the reaction [protein-PII]-L-tyrosine + UTP = [protein-PII]-uridylyl-L-tyrosine + diphosphate. The catalysed reaction is [protein-PII]-uridylyl-L-tyrosine + H2O = [protein-PII]-L-tyrosine + UMP + H(+). Uridylyltransferase (UTase) activity is inhibited by glutamine, while glutamine activates uridylyl-removing (UR) activity. In terms of biological role, modifies, by uridylylation and deuridylylation, the PII regulatory proteins (GlnB and homologs), in response to the nitrogen status of the cell that GlnD senses through the glutamine level. Under low glutamine levels, catalyzes the conversion of the PII proteins and UTP to PII-UMP and PPi, while under higher glutamine levels, GlnD hydrolyzes PII-UMP to PII and UMP (deuridylylation). Thus, controls uridylylation state and activity of the PII proteins, and plays an important role in the regulation of nitrogen assimilation and metabolism. This is Bifunctional uridylyltransferase/uridylyl-removing enzyme from Nitrosospira multiformis (strain ATCC 25196 / NCIMB 11849 / C 71).